We begin with the raw amino-acid sequence, 180 residues long: Beta-lactoglobulin (180 aa).

A signal peptide spans 1–18; sequence MKCLLLALGLALACGIQA. 3 cysteine pairs are disulfide-bonded: C84/C178, C124/C137, and C124/C139.

Belongs to the calycin superfamily. Lipocalin family. Under physiological conditions beta-lactoglobulin exists as an equilibrium mixture of monomeric and dimeric forms. Interaction with LMBR1L is controversial. Post-translationally, alternate disulfide bonds occur in equal amounts. As to expression, synthesized in mammary gland and secreted in milk.

Its subcellular location is the secreted. Functionally, primary component of whey, it binds retinol and is probably involved in the transport of that molecule. This chain is Beta-lactoglobulin (LGB), found in Capra hircus (Goat).